Reading from the N-terminus, the 763-residue chain is Translation initiation factor IF-2 (763 aa).

The disordered stretch occupies residues 52 to 178 (KQKKVQTSQN…KDEAIKHETK (127 aa)). The segment covering 65–82 (SNDENKKITNKNTEKTTE) has biased composition (basic and acidic residues). A compositionally biased stretch (polar residues) spans 86-96 (TVDSNKQNNSN). Composition is skewed to basic and acidic residues over residues 105-116 (RNNDEESVSHFD) and 123-135 (KSEM…LNDK). The segment covering 136-145 (KKNKNFKNTK) has biased composition (basic residues). The span at 146-161 (NKNSNNNKNSKNNKNN) shows a compositional bias: low complexity. Residues 162 to 178 (KNNDHNRKDEAIKHETK) show a composition bias toward basic and acidic residues. Residues 265 to 434 (ERPPVITVMG…LMVAEMEELK (170 aa)) form the tr-type G domain. The segment at 274-281 (GHVDHGKT) is G1. 274–281 (GHVDHGKT) lines the GTP pocket. The G2 stretch occupies residues 299–303 (GITQH). Residues 320–323 (DTPG) form a G3 region. GTP is bound by residues 320–324 (DTPGH) and 374–377 (NKID). The tract at residues 374–377 (NKID) is G4. The tract at residues 410-412 (SAR) is G5.

It belongs to the TRAFAC class translation factor GTPase superfamily. Classic translation factor GTPase family. IF-2 subfamily.

It localises to the cytoplasm. One of the essential components for the initiation of protein synthesis. Protects formylmethionyl-tRNA from spontaneous hydrolysis and promotes its binding to the 30S ribosomal subunits. Also involved in the hydrolysis of GTP during the formation of the 70S ribosomal complex. This is Translation initiation factor IF-2 from Finegoldia magna (strain ATCC 29328 / DSM 20472 / WAL 2508) (Peptostreptococcus magnus).